The following is a 442-amino-acid chain: GTPase Der (442 aa).

2 EngA-type G domains span residues 3-167 (PTIV…PADD) and 177-350 (PRVA…AAAM). Residues 9 to 16 (GRPNVGKS), 56 to 60 (DTAGF), 119 to 122 (NKAE), 183 to 190 (GRPNVGKS), 230 to 234 (DTAGL), and 295 to 298 (NKWD) contribute to the GTP site. Residues 351–435 (SNLSTPRLTR…PLRIQFRTAH (85 aa)) enclose the KH-like domain.

It belongs to the TRAFAC class TrmE-Era-EngA-EngB-Septin-like GTPase superfamily. EngA (Der) GTPase family. As to quaternary structure, associates with the 50S ribosomal subunit.

GTPase that plays an essential role in the late steps of ribosome biogenesis. This Azoarcus sp. (strain BH72) protein is GTPase Der.